The following is a 93-amino-acid chain: MSDVVNIVVWSKKGCSYCEEVKNYLNEKGFPFQNIDVSEKEKLRDILQVKYGVRHVPVVEIGRGNQYQGITEIGIEHLDLALANHAQIKEAKR.

Residues 1–93 form the Glutaredoxin domain; the sequence is MSDVVNIVVW…NHAQIKEAKR (93 aa). The cysteines at positions 15 and 18 are disulfide-linked.

The protein belongs to the glutaredoxin family.

It carries out the reaction N-acetyl-S-hydroxy-L-cysteine + AH2 = N-acetyl-L-cysteine + A + H2O. The protein operates within amino-acid metabolism. In terms of biological role, involved in a cysteine salvage pathway from S-alkylcysteine. Catalyzes the reduction of N-acetyl-S-hydroxy-L-cysteine (N-acetyl-L-cysteine sulfenic acid) to N-acetyl-L-cysteine. This pathway is likely important in the catabolism of alkylated cysteine generated by proteolysis of alkylated glutathione formed in the detoxification of a wide range of electrophiles. The sequence is that of N-acetyl-S-hydroxy-L-cysteine reductase from Bacillus subtilis (strain 168).